Consider the following 343-residue polypeptide: Methionine import ATP-binding protein MetN 1 (343 aa).

The region spanning 2 to 241 is the ABC transporter domain; the sequence is IKLSNITKVF…PKTPLAQKFI (240 aa). 38–45 is an ATP binding site; it reads GASGAGKS.

This sequence belongs to the ABC transporter superfamily. Methionine importer (TC 3.A.1.24) family. In terms of assembly, the complex is composed of two ATP-binding proteins (MetN), two transmembrane proteins (MetI) and a solute-binding protein (MetQ).

It is found in the cell inner membrane. The catalysed reaction is L-methionine(out) + ATP + H2O = L-methionine(in) + ADP + phosphate + H(+). It catalyses the reaction D-methionine(out) + ATP + H2O = D-methionine(in) + ADP + phosphate + H(+). Functionally, part of the ABC transporter complex MetNIQ involved in methionine import. Responsible for energy coupling to the transport system. In Salmonella paratyphi A (strain ATCC 9150 / SARB42), this protein is Methionine import ATP-binding protein MetN 1.